The chain runs to 330 residues: Aspartate--ammonia ligase (330 aa).

It belongs to the class-II aminoacyl-tRNA synthetase family. AsnA subfamily.

It localises to the cytoplasm. It carries out the reaction L-aspartate + NH4(+) + ATP = L-asparagine + AMP + diphosphate + H(+). Its pathway is amino-acid biosynthesis; L-asparagine biosynthesis; L-asparagine from L-aspartate (ammonia route): step 1/1. The chain is Aspartate--ammonia ligase from Enterobacter sp. (strain 638).